The primary structure comprises 328 residues: GTPase Obg 2 (328 aa).

The 139-residue stretch at 1-139 (MSFRREKFIE…HCVLLKLKIV (139 aa)) folds into the Obg domain. The OBG-type G domain maps to 140–309 (SDVGIIGMPN…LHAQVKKAVV (170 aa)). Residues 146–153 (GMPNAGKS), 171–175 (FTTLE), 192–195 (DIPG), 259–262 (NKCD), and 290–292 (GDE) each bind GTP. Mg(2+) contacts are provided by S153 and T173.

This sequence belongs to the TRAFAC class OBG-HflX-like GTPase superfamily. OBG GTPase family. In terms of assembly, monomer. Requires Mg(2+) as cofactor.

It localises to the cytoplasm. In terms of biological role, an essential GTPase which binds GTP, GDP and possibly (p)ppGpp with moderate affinity, with high nucleotide exchange rates and a fairly low GTP hydrolysis rate. Plays a role in control of the cell cycle, stress response, ribosome biogenesis and in those bacteria that undergo differentiation, in morphogenesis control. The protein is GTPase Obg 2 of Anaplasma marginale (strain Florida).